The following is a 136-amino-acid chain: Large-conductance mechanosensitive channel (136 aa).

At 1–16 (MGLLSEFKAFAVKGNV) the chain is on the cytoplasmic side. A helical transmembrane segment spans residues 17–45 (VDMAVGIIIGAAFGKIVSSFVGDVIMPPI). Residues 46-73 (GLLIGGVDFSDLAITLKAEGDVPAVVLA) are Extracellular-facing. The chain crosses the membrane as a helical span at residues 74-93 (YRKFIQTVLNFVIVAFAIFM). The Cytoplasmic portion of the chain corresponds to 94–136 (GVKAINRLKREEAVAPSEPPVPSAEETLLTEIRDLLKAQQNKS).

The protein belongs to the MscL family. As to quaternary structure, homopentamer.

The protein resides in the cell inner membrane. Channel that opens in response to stretch forces in the membrane lipid bilayer. Forms a nonselective ion channel with a conductance of about 4 nanosiemens. May participate in the regulation of osmotic pressure changes within the cell. The sequence is that of Large-conductance mechanosensitive channel from Pseudomonas fluorescens.